Consider the following 423-residue polypeptide: Structure-specific endonuclease subunit SLX1 (423 aa).

The GIY-YIG domain maps to 23-105 (AFYCCYLLRS…QNTKVSRHAD (83 aa)). 2 disordered regions span residues 300 to 334 (RRRRQAGTPKGQGLKSVRGRGRGRGHSEDESDALQ) and 365 to 406 (AHRP…LGLQ).

Belongs to the SLX1 family. Forms a heterodimer with SLX4. The cofactor is a divalent metal cation.

It localises to the nucleus. Functionally, catalytic subunit of the SLX1-SLX4 structure-specific endonuclease that resolves DNA secondary structures generated during DNA repair and recombination. Has endonuclease activity towards branched DNA substrates, introducing single-strand cuts in duplex DNA close to junctions with ss-DNA. This Paracoccidioides brasiliensis (strain Pb03) protein is Structure-specific endonuclease subunit SLX1.